We begin with the raw amino-acid sequence, 543 residues long: Chaperonin GroEL (543 aa).

ATP contacts are provided by residues T30–P33, K51, D87–T91, G415, N480–L482, and D496.

It belongs to the chaperonin (HSP60) family. Forms a cylinder of 14 subunits composed of two heptameric rings stacked back-to-back. Interacts with the co-chaperonin GroES.

It localises to the cytoplasm. It catalyses the reaction ATP + H2O + a folded polypeptide = ADP + phosphate + an unfolded polypeptide.. Its function is as follows. Together with its co-chaperonin GroES, plays an essential role in assisting protein folding. The GroEL-GroES system forms a nano-cage that allows encapsulation of the non-native substrate proteins and provides a physical environment optimized to promote and accelerate protein folding. This is Chaperonin GroEL from Gemmatimonas aurantiaca (strain DSM 14586 / JCM 11422 / NBRC 100505 / T-27).